The primary structure comprises 99 residues: Secreted RxLR effector protein 94 (99 aa).

The RxLR-dEER signature appears at 35–55 (RQLRQSANPSKAWHQWKSETR).

The protein belongs to the RxLR effector family.

The protein localises to the secreted. It is found in the host nucleus. The protein resides in the host cytoplasm. Secreted effector that completely suppresses the host cell death induced by cell death-inducing proteins. This Plasmopara viticola (Downy mildew of grapevine) protein is Secreted RxLR effector protein 94.